Here is a 539-residue protein sequence, read N- to C-terminus: Phosphoenolpyruvate carboxykinase (ATP) (539 aa).

Substrate is bound by residues Arg64, Tyr206, and Lys212. ATP contacts are provided by residues Lys212, His231, and 247–255; that span reads GLSGTGKTT. The Mn(2+) site is built by Lys212 and His231. Asp268 is a binding site for Mn(2+). ATP contacts are provided by residues Glu296, Arg332, 448–449, and Thr454; that span reads RI. Arg332 lines the substrate pocket.

It belongs to the phosphoenolpyruvate carboxykinase (ATP) family. In terms of assembly, monomer. It depends on Mn(2+) as a cofactor.

It localises to the cytoplasm. It carries out the reaction oxaloacetate + ATP = phosphoenolpyruvate + ADP + CO2. It functions in the pathway carbohydrate biosynthesis; gluconeogenesis. Involved in the gluconeogenesis. Catalyzes the conversion of oxaloacetate (OAA) to phosphoenolpyruvate (PEP) through direct phosphoryl transfer between the nucleoside triphosphate and OAA. This Yersinia pseudotuberculosis serotype O:1b (strain IP 31758) protein is Phosphoenolpyruvate carboxykinase (ATP).